Reading from the N-terminus, the 269-residue chain is 3-methyl-2-oxobutanoate hydroxymethyltransferase (269 aa).

Mg(2+)-binding residues include Asp-49 and Asp-88. 3-methyl-2-oxobutanoate-binding positions include 49 to 50 (DS), Asp-88, and Lys-118. Glu-120 is a binding site for Mg(2+). Glu-186 (proton acceptor) is an active-site residue.

Belongs to the PanB family. As to quaternary structure, homodecamer; pentamer of dimers. It depends on Mg(2+) as a cofactor.

The protein resides in the cytoplasm. The catalysed reaction is 3-methyl-2-oxobutanoate + (6R)-5,10-methylene-5,6,7,8-tetrahydrofolate + H2O = 2-dehydropantoate + (6S)-5,6,7,8-tetrahydrofolate. It functions in the pathway cofactor biosynthesis; (R)-pantothenate biosynthesis; (R)-pantoate from 3-methyl-2-oxobutanoate: step 1/2. Its function is as follows. Catalyzes the reversible reaction in which hydroxymethyl group from 5,10-methylenetetrahydrofolate is transferred onto alpha-ketoisovalerate to form ketopantoate. The protein is 3-methyl-2-oxobutanoate hydroxymethyltransferase of Pelobacter propionicus (strain DSM 2379 / NBRC 103807 / OttBd1).